A 231-amino-acid polypeptide reads, in one-letter code: Ribonuclease HII (231 aa).

One can recognise an RNase H type-2 domain in the interval 33-222; the sequence is WPVAGADEAG…FREAQEQPLA (190 aa). A divalent metal cation is bound by residues Asp39, Glu40, and Asp130.

The protein belongs to the RNase HII family. Mn(2+) serves as cofactor. Requires Mg(2+) as cofactor.

It localises to the cytoplasm. It catalyses the reaction Endonucleolytic cleavage to 5'-phosphomonoester.. Functionally, endonuclease that specifically degrades the RNA of RNA-DNA hybrids. In Sinorhizobium fredii (strain NBRC 101917 / NGR234), this protein is Ribonuclease HII.